A 2667-amino-acid polypeptide reads, in one-letter code: eIF-2-alpha kinase activator GCN1 (2667 aa).

HEAT repeat units lie at residues 19–56, 95–132, 159–198, 293–330, 336–375, 398–439, 466–503, and 794–832; these read DSFY…HELS, QWIF…VKFT, SFSL…LQHM, DLQS…DFNV, LLKS…RSKD, SQKL…SISI, ELPE…PEAN, and LLNE…ELFV. Positions 842–879 are disordered; it reads RNDRKVKPKTAEEQRDEESRKRIEEKKKIQSGELEKQE. HEAT repeat units follow at residues 929 to 967, 985 to 1024, 1085 to 1122, 1199 to 1237, 1290 to 1330, 1333 to 1370, 1371 to 1407, 1412 to 1450, 1454 to 1491, 1492 to 1529, 1533 to 1570, 1572 to 1608, 1610 to 1647, 1652 to 1689, 1691 to 1728, 1729 to 1766, 1770 to 1807, and 1809 to 1845; these read PIIV…LDRS, LSEI…IIKN, GVET…IYSP, HMIP…ATAL, GELL…HMDA, PKVS…SFKK, QGDR…VKGL, LKNY…TIGR, PYII…QLSG, HGVK…CAPK, SCLP…VIRN, EIQI…HTID, ASLS…LTEP, PYLN…GMGE, NFST…SLDI, SRFN…SLGD, PYLP…QFAV, and GIEV…KLAG. The tract at residues 1853–1875 is disordered; sequence SNNSSYNAKDDDDDEPGSSGNDI. HEAT repeat units lie at residues 1882-1919, 1923-1960, 1962-1998, 2002-2039, 2040-2078, 2080-2110, 2114-2152, 2154-2190, 2193-2230, and 2264-2301; these read ERLG…NTPK, EILP…KLSD, ILPE…SAKT, PYLS…TFGS, KASN…VRSS, VLPV…DAGE, VHLS…SIDE, GWDT…GNTM, EYPE…SLKK, and KGLA…HTSA. Residues 2265–2412 are RWDBD region; the sequence is GLASVLPVLI…ISQESKLRAL (148 aa). The HEAT 37; degenerate repeat unit spans residues 2326–2348; that stretch reads QVKSAILQTLSLLISKSPASMKI. Residues 2349-2385 form an HEAT 38; degenerate repeat; the sequence is FLHQLQPTFIKCLSDSHKNVRTNAASALGLLMTLSSS. HEAT repeat units lie at residues 2387–2421, 2425–2462, 2508–2545, and 2546–2583; these read DQLV…KKPK, ATLD…CFTS, PNMP…ASPL, and TYAK…SNQQ.

This sequence belongs to the GCN1 family. In terms of assembly, interacts with eif2ak4/gcn2; this interaction stimulates the eif2ak4/gcn2 kinase activity and is impaired by impact upon a variety of stress conditions, such as amino acid depletion, UV-C irradiation, proteasome inhibitor treatment and glucose deprivation. Interacts with impact; this prevents the interaction of gcn1 with eif2ak4/gcn2 and inhibits eif2ak4/gcn2 kinase activity.

The protein localises to the cytoplasm. Its function is as follows. Ribosome collision sensor that activates a translation quality control pathway when a ribosome has stalled during translation. Directly binds to the ribosome and acts as a sentinel for colliding ribosomes. Gcn1 also acts as a positive activator of the integrated stress response (ISR) by mediating activation of eif2ak4/gcn2 in response to amino acid starvation. Interaction with eif2ak4/gcn2 on translating ribosomes stimulates eif2ak4/gcn2 kinase activity, leading to phosphorylation of eukaryotic translation initiation factor 2 (eIF-2-alpha/eif2s1). EIF2S1/eIF-2-alpha phosphorylation converts EIF2S1/eIF-2-alpha into a global protein synthesis inhibitor, leading to a global attenuation of cap-dependent translation, and thus to a reduced overall utilization of amino acids, while concomitantly initiating the preferential translation of ISR-specific mRNAs, such as the transcriptional activator atf4, and hence allowing atf4-mediated reprogramming of amino acid biosynthetic gene expression to alleviate nutrient depletion. The chain is eIF-2-alpha kinase activator GCN1 from Dictyostelium discoideum (Social amoeba).